The chain runs to 103 residues: UPF0145 protein NT01CX_0170 (103 aa).

Belongs to the UPF0145 family.

This Clostridium novyi (strain NT) protein is UPF0145 protein NT01CX_0170.